We begin with the raw amino-acid sequence, 176 residues long: ATP synthase subunit delta (176 aa).

It belongs to the ATPase delta chain family. F-type ATPases have 2 components, F(1) - the catalytic core - and F(0) - the membrane proton channel. F(1) has five subunits: alpha(3), beta(3), gamma(1), delta(1), epsilon(1). F(0) has three main subunits: a(1), b(2) and c(10-14). The alpha and beta chains form an alternating ring which encloses part of the gamma chain. F(1) is attached to F(0) by a central stalk formed by the gamma and epsilon chains, while a peripheral stalk is formed by the delta and b chains.

It is found in the cell inner membrane. In terms of biological role, f(1)F(0) ATP synthase produces ATP from ADP in the presence of a proton or sodium gradient. F-type ATPases consist of two structural domains, F(1) containing the extramembraneous catalytic core and F(0) containing the membrane proton channel, linked together by a central stalk and a peripheral stalk. During catalysis, ATP synthesis in the catalytic domain of F(1) is coupled via a rotary mechanism of the central stalk subunits to proton translocation. This protein is part of the stalk that links CF(0) to CF(1). It either transmits conformational changes from CF(0) to CF(1) or is implicated in proton conduction. The polypeptide is ATP synthase subunit delta (Nitratiruptor sp. (strain SB155-2)).